Here is a 137-residue protein sequence, read N- to C-terminus: Large-conductance mechanosensitive channel (137 aa).

The next 2 helical transmembrane spans lie at 10–30 and 76–96; these read FAMR…AAFG and GAFI…FMAI.

Belongs to the MscL family. As to quaternary structure, homopentamer.

It is found in the cell inner membrane. Functionally, channel that opens in response to stretch forces in the membrane lipid bilayer. May participate in the regulation of osmotic pressure changes within the cell. This is Large-conductance mechanosensitive channel from Pectobacterium carotovorum subsp. carotovorum (strain PC1).